The following is a 122-amino-acid chain: Large ribosomal subunit protein uL14 (122 aa).

It belongs to the universal ribosomal protein uL14 family. As to quaternary structure, part of the 50S ribosomal subunit. Forms a cluster with proteins L3 and L19. In the 70S ribosome, L14 and L19 interact and together make contacts with the 16S rRNA in bridges B5 and B8.

In terms of biological role, binds to 23S rRNA. Forms part of two intersubunit bridges in the 70S ribosome. The sequence is that of Large ribosomal subunit protein uL14 from Caldicellulosiruptor bescii (strain ATCC BAA-1888 / DSM 6725 / KCTC 15123 / Z-1320) (Anaerocellum thermophilum).